The following is a 361-amino-acid chain: Peptidyl-prolyl cis-trans isomerase CYP40 (361 aa).

The PPIase cyclophilin-type domain maps to 7–172 (FMDISIGGEL…QDVVIHDCGE (166 aa)). 2 TPR repeats span residues 212–245 (VDFVKAHGNEHFKKQDYKMALRKYRKALRYLDIC) and 298–331 (VKALFRQGQAYMALNNVDAAAESLEKALQFEPND).

This sequence belongs to the cyclophilin-type PPIase family. Expressed at low levels in seedlings, roots, shoots, leaves, stems, inflorescences, flowers and siliques, with highest levels dividing tissues.

Its subcellular location is the cytoplasm. It carries out the reaction [protein]-peptidylproline (omega=180) = [protein]-peptidylproline (omega=0). With respect to regulation, binds cyclosporin A (CsA). CsA mediates some of its effects via an inhibitory action on PPIase. In terms of biological role, PPIases accelerate the folding of proteins. It catalyzes the cis-trans isomerization of proline imidic peptide bonds in oligopeptides. Involved in promoting the expression of the juvenile phase of vegetative development, and, to a lower extent, in regulating the positioning of floral buds, floral morphogenesis and the expression of HSPs. Collaboratively with RBL and ULT1, influences floral meristem (FM) determinacy in an AGAMOUS and SUPERMAN-dependent manner, thus contributing to the floral developmental homeostasis. The protein is Peptidyl-prolyl cis-trans isomerase CYP40 of Arabidopsis thaliana (Mouse-ear cress).